The sequence spans 105 residues: Putative neurotoxin 10 (105 aa).

A signal peptide spans 1–21 (MTVSCSKVLLSLCLFLMLLKA).

It belongs to the scolopendra neurotoxin 10 family. Post-translationally, contains 3 disulfide bonds. As to expression, expressed by the venom gland.

Its subcellular location is the secreted. In Scolopendra subspinipes (Vietnamese centipede), this protein is Putative neurotoxin 10.